Consider the following 317-residue polypeptide: Transaldolase (317 aa).

The Schiff-base intermediate with substrate role is filled by lysine 132.

This sequence belongs to the transaldolase family. Type 1 subfamily. Homodimer.

The protein localises to the cytoplasm. The enzyme catalyses D-sedoheptulose 7-phosphate + D-glyceraldehyde 3-phosphate = D-erythrose 4-phosphate + beta-D-fructose 6-phosphate. The protein operates within carbohydrate degradation; pentose phosphate pathway; D-glyceraldehyde 3-phosphate and beta-D-fructose 6-phosphate from D-ribose 5-phosphate and D-xylulose 5-phosphate (non-oxidative stage): step 2/3. Transaldolase is important for the balance of metabolites in the pentose-phosphate pathway. The chain is Transaldolase (talB) from Escherichia coli O104:H4 (strain 2009EL-2071).